Here is a 245-residue protein sequence, read N- to C-terminus: Nicotinamide/nicotinic acid mononucleotide adenylyltransferase 3 (245 aa).

NAD(+) contacts are provided by serine 14 and phenylalanine 15. ATP is bound by residues histidine 22 and lysine 56. Residues tryptophan 90, threonine 93, glycine 134, and aspartate 136 each coordinate NAD(+). Lysine 139 contacts ATP. Residues leucine 146, tryptophan 147, arginine 166, and asparagine 197 each coordinate NAD(+). 202 to 205 (TYVR) provides a ligand contact to ATP.

The protein belongs to the eukaryotic NMN adenylyltransferase family. Homotetramer. Mg(2+) serves as cofactor.

Its subcellular location is the mitochondrion. It carries out the reaction beta-nicotinamide D-ribonucleotide + ATP + H(+) = diphosphate + NAD(+). The enzyme catalyses nicotinate beta-D-ribonucleotide + ATP + H(+) = deamido-NAD(+) + diphosphate. It functions in the pathway cofactor biosynthesis; NAD(+) biosynthesis; NAD(+) from nicotinamide D-ribonucleotide: step 1/1. It participates in cofactor biosynthesis; NAD(+) biosynthesis; deamido-NAD(+) from nicotinate D-ribonucleotide: step 1/1. Its activity is regulated as follows. Activity is strongly inhibited by galotannin. Inhibited by P1-(adenosine-5')-P4-(nicotinic-acid-riboside-5')-tetraphosphate (Nap4AD). Functionally, catalyzes the formation of NAD(+) from nicotinamide mononucleotide (NMN) and ATP. Can also use the deamidated form; nicotinic acid mononucleotide (NaMN) as substrate with the same efficiency. Can use triazofurin monophosphate (TrMP) as substrate. Can also use GTP and ITP as nucleotide donors. Also catalyzes the reverse reaction, i.e. the pyrophosphorolytic cleavage of NAD(+). For the pyrophosphorolytic activity, can use NAD(+), NADH, NaAD, nicotinic acid adenine dinucleotide phosphate (NHD), nicotinamide guanine dinucleotide (NGD) as substrates. Fails to cleave phosphorylated dinucleotides NADP(+), NADPH and NaADP(+). Protects against axonal degeneration following injury. May be involved in the maintenance of axonal integrity. Also functions as a stress-response chaperone protein that prevents toxic aggregation of proteins; this function may be independent of its NAD(+) synthesis activity. The chain is Nicotinamide/nicotinic acid mononucleotide adenylyltransferase 3 from Mus musculus (Mouse).